Reading from the N-terminus, the 89-residue chain is Small ribosomal subunit protein uS15 (89 aa).

Residues 1–11 (MSITAERKAEV) show a composition bias toward basic and acidic residues. The tract at residues 1–24 (MSITAERKAEVIKTSATKAGDTGS) is disordered.

It belongs to the universal ribosomal protein uS15 family. As to quaternary structure, part of the 30S ribosomal subunit. Forms a bridge to the 50S subunit in the 70S ribosome, contacting the 23S rRNA.

In terms of biological role, one of the primary rRNA binding proteins, it binds directly to 16S rRNA where it helps nucleate assembly of the platform of the 30S subunit by binding and bridging several RNA helices of the 16S rRNA. Functionally, forms an intersubunit bridge (bridge B4) with the 23S rRNA of the 50S subunit in the ribosome. This Rhodopseudomonas palustris (strain TIE-1) protein is Small ribosomal subunit protein uS15.